The chain runs to 1336 residues: Coiled-coil and C2 domain-containing protein 2A (1336 aa).

Disordered stretches follow at residues Met1–Val29 and Val70–Ile97. Basic residues predominate over residues Lys8–Arg23. Residues Val70–Thr89 show a composition bias toward acidic residues. Residues Leu136–Gln156 are a coiled coil. The 161-residue stretch at Pro755 to Ile915 folds into the C2 domain.

In terms of assembly, probable component of the tectonic-like complex (also named MKS complex), composed of B9d1, B9d2, Cc2d2a, Mks1 and tctn. In terms of tissue distribution, expressed in the antennae of chordotonal neurons and male germ cells (at protein level).

Its subcellular location is the cytoplasm. It is found in the cytoskeleton. The protein resides in the cilium basal body. The protein localises to the microtubule organizing center. It localises to the centrosome. Its subcellular location is the centriole. Its function is as follows. Probable component of the tectonic-like complex (also named MKS complex), a complex localized at the transition zone of primary cilia. Required for ciliary structure and function. This chain is Coiled-coil and C2 domain-containing protein 2A, found in Drosophila melanogaster (Fruit fly).